The chain runs to 319 residues: NADH-quinone oxidoreductase subunit H 1 (319 aa).

Transmembrane regions (helical) follow at residues 1–21 (MIGL…LLVV), 77–97 (ILAP…VAFG), 107–127 (VGVL…MLGA), 147–167 (LAYE…AGSL), 179–199 (VWFV…GVAA), 214–234 (LVAG…FLGE), 238–258 (VLLV…GPWL), 262–282 (IWFG…RATL), and 293–313 (FAWK…GIVV).

This sequence belongs to the complex I subunit 1 family. As to quaternary structure, NDH-1 is composed of 14 different subunits. Subunits NuoA, H, J, K, L, M, N constitute the membrane sector of the complex.

Its subcellular location is the cell inner membrane. It catalyses the reaction a quinone + NADH + 5 H(+)(in) = a quinol + NAD(+) + 4 H(+)(out). Its function is as follows. NDH-1 shuttles electrons from NADH, via FMN and iron-sulfur (Fe-S) centers, to quinones in the respiratory chain. The immediate electron acceptor for the enzyme in this species is believed to be ubiquinone. Couples the redox reaction to proton translocation (for every two electrons transferred, four hydrogen ions are translocated across the cytoplasmic membrane), and thus conserves the redox energy in a proton gradient. This subunit may bind ubiquinone. This Rhodopseudomonas palustris (strain HaA2) protein is NADH-quinone oxidoreductase subunit H 1.